The chain runs to 252 residues: F-box/SPRY domain-containing protein 1 (252 aa).

Positions 1 to 48 (MVDPLCNYNVLESIFSYLELNDLNRCSQVCKSWYHFLNDENSDVWRWH) constitute an F-box domain. The B30.2/SPRY domain occupies 58–250 (VKSDLLSSVT…VSMVYLGTPL (193 aa)).

This sequence belongs to the FBXO45/Fsn family. As to quaternary structure, component of an E3 ubiquitin ligase complex composed of hiw and Fsn.

Its subcellular location is the synapse. The protein operates within protein modification; protein ubiquitination. Its function is as follows. Required in the presynaptic motoneuron to down-regulate the levels of wnd and restrain synaptic terminal growth at the neuromuscular junction (NMJ). This chain is F-box/SPRY domain-containing protein 1, found in Drosophila grimshawi (Hawaiian fruit fly).